The chain runs to 266 residues: Thymidylate synthase (266 aa).

Arginine 24 lines the dUMP pocket. Histidine 54 is a binding site for (6R)-5,10-methylene-5,6,7,8-tetrahydrofolate. 129–130 (RR) contributes to the dUMP binding site. Cysteine 149 serves as the catalytic Nucleophile. Residues 169-172 (RSAD), asparagine 180, and 210-212 (HIY) contribute to the dUMP site. Residue aspartate 172 coordinates (6R)-5,10-methylene-5,6,7,8-tetrahydrofolate. Alanine 265 contacts (6R)-5,10-methylene-5,6,7,8-tetrahydrofolate.

It belongs to the thymidylate synthase family. Bacterial-type ThyA subfamily. In terms of assembly, homodimer.

It localises to the cytoplasm. The enzyme catalyses dUMP + (6R)-5,10-methylene-5,6,7,8-tetrahydrofolate = 7,8-dihydrofolate + dTMP. It functions in the pathway pyrimidine metabolism; dTTP biosynthesis. Catalyzes the reductive methylation of 2'-deoxyuridine-5'-monophosphate (dUMP) to 2'-deoxythymidine-5'-monophosphate (dTMP) while utilizing 5,10-methylenetetrahydrofolate (mTHF) as the methyl donor and reductant in the reaction, yielding dihydrofolate (DHF) as a by-product. This enzymatic reaction provides an intracellular de novo source of dTMP, an essential precursor for DNA biosynthesis. The chain is Thymidylate synthase from Nocardia farcinica (strain IFM 10152).